The sequence spans 298 residues: uncharacterized protein (298 aa).

A run of 10 helical transmembrane segments spans residues 9–28 (GYVL…LYFK), 38–60 (IIVQ…WKHP), 72–94 (RFVV…VWAV), 104–121 (LGYY…MLLL), 128–145 (LQWL…QQVW), 150–167 (LPWV…YGLI), 174–196 (AALP…WLLF), 211–233 (PEAL…FNAA), 240–262 (ATLG…LLFG), and 272–291 (AFAF…WRSL). Positions 18 to 141 (VIWGLFPLYF…AVALASLGVA (124 aa)) constitute an EamA domain.

This sequence belongs to the EamA transporter family.

It is found in the cell membrane. This is an uncharacterized protein from Pseudomonas aeruginosa (strain ATCC 15692 / DSM 22644 / CIP 104116 / JCM 14847 / LMG 12228 / 1C / PRS 101 / PAO1).